We begin with the raw amino-acid sequence, 215 residues long: Adenylate kinase (215 aa).

An ATP-binding site is contributed by 10–15 (GCGKGT). The NMP stretch occupies residues 30 to 59 (STGDIFRQTIDQKGPYWEELKSYISKGLLV). AMP is bound by residues threonine 31, arginine 36, 57-59 (LLV), and glutamine 91. An LID region spans residues 120 to 157 (GRRICSKCKRIYNIHYSAPKKEDICDDDGEFLIQRKDD). Arginine 121 contributes to the ATP binding site. Cysteine 124 and cysteine 127 together coordinate Zn(2+). 130 to 131 (IY) serves as a coordination point for ATP. The Zn(2+) site is built by cysteine 144 and aspartate 147. 2 residues coordinate AMP: arginine 154 and arginine 165.

This sequence belongs to the adenylate kinase family. In terms of assembly, monomer.

The protein localises to the cytoplasm. The enzyme catalyses AMP + ATP = 2 ADP. The protein operates within purine metabolism; AMP biosynthesis via salvage pathway; AMP from ADP: step 1/1. Functionally, catalyzes the reversible transfer of the terminal phosphate group between ATP and AMP. Plays an important role in cellular energy homeostasis and in adenine nucleotide metabolism. The chain is Adenylate kinase from Malacoplasma penetrans (strain HF-2) (Mycoplasma penetrans).